The chain runs to 239 residues: Small ribosomal subunit protein uS5 (239 aa).

The interval 1 to 62 (MADETEIQAA…DDRRGSEEQG (62 aa)) is disordered. The span at 9 to 19 (AAAPAEAAPGA) shows a compositional bias: low complexity. Over residues 34-62 (GGNDRGGDRGRGRDGRGRRDDRRGSEEQG) the composition is skewed to basic and acidic residues. The 64-residue stretch at 65 to 128 (LIEKLVHINR…AAAKKAMVRV (64 aa)) folds into the S5 DRBM domain.

It belongs to the universal ribosomal protein uS5 family. Part of the 30S ribosomal subunit. Contacts proteins S4 and S8.

Its function is as follows. With S4 and S12 plays an important role in translational accuracy. Functionally, located at the back of the 30S subunit body where it stabilizes the conformation of the head with respect to the body. This chain is Small ribosomal subunit protein uS5, found in Rhizorhabdus wittichii (strain DSM 6014 / CCUG 31198 / JCM 15750 / NBRC 105917 / EY 4224 / RW1) (Sphingomonas wittichii).